Reading from the N-terminus, the 169-residue chain is Ribosome maturation factor RimM (169 aa).

One can recognise a PRC barrel domain in the interval 95–169 (EDGYYWTDLI…QITVDWELGY (75 aa)).

The protein belongs to the RimM family. In terms of assembly, binds ribosomal protein uS19.

Its subcellular location is the cytoplasm. An accessory protein needed during the final step in the assembly of 30S ribosomal subunit, possibly for assembly of the head region. Essential for efficient processing of 16S rRNA. May be needed both before and after RbfA during the maturation of 16S rRNA. It has affinity for free ribosomal 30S subunits but not for 70S ribosomes. The sequence is that of Ribosome maturation factor RimM from Nitrosomonas europaea (strain ATCC 19718 / CIP 103999 / KCTC 2705 / NBRC 14298).